Consider the following 156-residue polypeptide: Cell division protein SepF (156 aa).

The span at 20–36 (AQYGYEKEQTDMKKQQD) shows a compositional bias: basic and acidic residues. The segment at 20–50 (AQYGYEKEQTDMKKQQDPPEQQDVTFPKAQP) is disordered.

It belongs to the SepF family. As to quaternary structure, homodimer. Interacts with FtsZ.

Its subcellular location is the cytoplasm. Cell division protein that is part of the divisome complex and is recruited early to the Z-ring. Probably stimulates Z-ring formation, perhaps through the cross-linking of FtsZ protofilaments. Its function overlaps with FtsA. The polypeptide is Cell division protein SepF (Bacillus cereus (strain G9842)).